A 282-amino-acid chain; its full sequence is Bifunctional protein FolD 2 (282 aa).

NADP(+) contacts are provided by residues glycine 164–serine 166 and serine 189.

Belongs to the tetrahydrofolate dehydrogenase/cyclohydrolase family. As to quaternary structure, homodimer.

The enzyme catalyses (6R)-5,10-methylene-5,6,7,8-tetrahydrofolate + NADP(+) = (6R)-5,10-methenyltetrahydrofolate + NADPH. It carries out the reaction (6R)-5,10-methenyltetrahydrofolate + H2O = (6R)-10-formyltetrahydrofolate + H(+). It functions in the pathway one-carbon metabolism; tetrahydrofolate interconversion. Catalyzes the oxidation of 5,10-methylenetetrahydrofolate to 5,10-methenyltetrahydrofolate and then the hydrolysis of 5,10-methenyltetrahydrofolate to 10-formyltetrahydrofolate. This Lactobacillus johnsonii (strain CNCM I-12250 / La1 / NCC 533) protein is Bifunctional protein FolD 2.